Reading from the N-terminus, the 146-residue chain is UPF0178 protein BCAH187_A3092 (146 aa).

Belongs to the UPF0178 family.

This Bacillus cereus (strain AH187) protein is UPF0178 protein BCAH187_A3092.